Reading from the N-terminus, the 200-residue chain is Large ribosomal subunit protein uL4 (200 aa).

A disordered region spans residues 38-65; the sequence is GRQGSKAQKTRSEVSGGGKKPWRQKGTG.

It belongs to the universal ribosomal protein uL4 family. In terms of assembly, part of the 50S ribosomal subunit.

In terms of biological role, one of the primary rRNA binding proteins, this protein initially binds near the 5'-end of the 23S rRNA. It is important during the early stages of 50S assembly. It makes multiple contacts with different domains of the 23S rRNA in the assembled 50S subunit and ribosome. Forms part of the polypeptide exit tunnel. This Pseudomonas aeruginosa (strain LESB58) protein is Large ribosomal subunit protein uL4.